The primary structure comprises 71 residues: Large ribosomal subunit protein bL31 (71 aa).

Zn(2+) is bound by residues C16, C18, C37, and C40.

The protein belongs to the bacterial ribosomal protein bL31 family. Type A subfamily. In terms of assembly, part of the 50S ribosomal subunit. Zn(2+) is required as a cofactor.

Functionally, binds the 23S rRNA. This is Large ribosomal subunit protein bL31 from Chromohalobacter salexigens (strain ATCC BAA-138 / DSM 3043 / CIP 106854 / NCIMB 13768 / 1H11).